Here is a 254-residue protein sequence, read N- to C-terminus: MKIYIITIFPDYFECFKNYGVVNKAIKSGLVEINTINLRDFTSDKHKTVDDVVYGGGPGMLLKPEPIFKAFDYIKNISKNPYTIITEPWGKTFNQEMARKLAEKEELVIICGRYEGVDERVKTLVDEEISIGDYILSGGEPATLVIMDSVIRLLPGVLSDDESKEVDSFSDGLLGYPNYTRPAEFRGMKVPEVLLSGNHKLIEKWRRFQKLKRTYKNRPDLLEKAKLSVEDKQLLKYIIEGKEFEDLIKEGKIA.

Residues glycine 112 and isoleucine 131–leucine 136 each bind S-adenosyl-L-methionine.

The protein belongs to the RNA methyltransferase TrmD family. Homodimer.

The protein localises to the cytoplasm. The enzyme catalyses guanosine(37) in tRNA + S-adenosyl-L-methionine = N(1)-methylguanosine(37) in tRNA + S-adenosyl-L-homocysteine + H(+). Its function is as follows. Specifically methylates guanosine-37 in various tRNAs. The polypeptide is tRNA (guanine-N(1)-)-methyltransferase (Sulfurihydrogenibium sp. (strain YO3AOP1)).